A 278-amino-acid polypeptide reads, in one-letter code: Phosphoenolpyruvate carboxylase kinase 2 (278 aa).

Residues 11-269 (YQLCDEIGRG…AEDALRHSWM (259 aa)) enclose the Protein kinase domain. Residues 17–25 (IGRGRFGTI) and K40 contribute to the ATP site. The Proton acceptor role is filled by D137.

This sequence belongs to the protein kinase superfamily. Ser/Thr protein kinase family. In terms of tissue distribution, expressed in flowers and roots, and at lower levels in cauline leaves. Barely detectable in rosette leaves and stems.

It catalyses the reaction L-seryl-[protein] + ATP = O-phospho-L-seryl-[protein] + ADP + H(+). The enzyme catalyses L-threonyl-[protein] + ATP = O-phospho-L-threonyl-[protein] + ADP + H(+). Calcium-independent kinase involved in light-dependent phosphoenolpyruvate carboxylase phosphorylation. In Arabidopsis thaliana (Mouse-ear cress), this protein is Phosphoenolpyruvate carboxylase kinase 2 (PPCK2).